A 294-amino-acid chain; its full sequence is ATP phosphoribosyltransferase (294 aa).

Belongs to the ATP phosphoribosyltransferase family. Long subfamily. Mg(2+) is required as a cofactor.

It is found in the cytoplasm. It carries out the reaction 1-(5-phospho-beta-D-ribosyl)-ATP + diphosphate = 5-phospho-alpha-D-ribose 1-diphosphate + ATP. It functions in the pathway amino-acid biosynthesis; L-histidine biosynthesis; L-histidine from 5-phospho-alpha-D-ribose 1-diphosphate: step 1/9. With respect to regulation, feedback inhibited by histidine. In terms of biological role, catalyzes the condensation of ATP and 5-phosphoribose 1-diphosphate to form N'-(5'-phosphoribosyl)-ATP (PR-ATP). Has a crucial role in the pathway because the rate of histidine biosynthesis seems to be controlled primarily by regulation of HisG enzymatic activity. This is ATP phosphoribosyltransferase from Maricaulis maris (strain MCS10) (Caulobacter maris).